A 167-amino-acid chain; its full sequence is Stress-related protein (167 aa).

This sequence belongs to the REF/SRPP family.

Functionally, plays a role in plant defense. This Phaseolus vulgaris (Kidney bean) protein is Stress-related protein (SRP).